Consider the following 470-residue polypeptide: Cell division protein FtsA (470 aa).

The tract at residues 416-470 is disordered; the sequence is NKKDTHENEVESTDEEIYQSEDNHQEHKQNHEHVQDKDKDKEESKFKKLMKSLFE. The segment covering 425-434 has biased composition (acidic residues); sequence VESTDEEIYQ. Basic and acidic residues predominate over residues 436 to 461; it reads EDNHQEHKQNHEHVQDKDKDKEESKF.

It belongs to the FtsA/MreB family. Self-interacts. Interacts with FtsZ.

It is found in the cell membrane. In terms of biological role, cell division protein that is involved in the assembly of the Z ring. May serve as a membrane anchor for the Z ring. This is Cell division protein FtsA from Staphylococcus aureus (strain NCTC 8325 / PS 47).